The sequence spans 380 residues: Cytochrome b (380 aa).

The next 4 helical transmembrane spans lie at 34–54 (FGSL…LLAM), 78–99 (WLIR…YLHI), 114–134 (WNTG…GYVL), and 179–199 (FFAL…IHLT). Residues His84 and His98 each contribute to the heme b site. Heme b-binding residues include His183 and His197. His202 is a binding site for a ubiquinone. The next 4 helical transmembrane spans lie at 227–247 (LKDI…ALFS), 289–309 (LGGV…PFLH), 321–341 (LSQL…WVGS), and 348–368 (FIII…ILFP).

The protein belongs to the cytochrome b family. The cytochrome bc1 complex contains 11 subunits: 3 respiratory subunits (MT-CYB, CYC1 and UQCRFS1), 2 core proteins (UQCRC1 and UQCRC2) and 6 low-molecular weight proteins (UQCRH/QCR6, UQCRB/QCR7, UQCRQ/QCR8, UQCR10/QCR9, UQCR11/QCR10 and a cleavage product of UQCRFS1). This cytochrome bc1 complex then forms a dimer. Heme b serves as cofactor.

The protein resides in the mitochondrion inner membrane. Functionally, component of the ubiquinol-cytochrome c reductase complex (complex III or cytochrome b-c1 complex) that is part of the mitochondrial respiratory chain. The b-c1 complex mediates electron transfer from ubiquinol to cytochrome c. Contributes to the generation of a proton gradient across the mitochondrial membrane that is then used for ATP synthesis. In Macronectes giganteus (Southern giant petrel), this protein is Cytochrome b (MT-CYB).